We begin with the raw amino-acid sequence, 75 residues long: Kappa-thalatoxin-Tas2a (75 aa).

The first 22 residues, 1–22 (MKFQMIAAVLLIAFCLSVVVTA), serve as a signal peptide directing secretion. The propeptide occupies 23 to 40 (RMELQDDEEMKNGSFQKR). One can recognise a ShKT domain in the interval 43–75 (CIDTIPKSRCTAFQCKHSMKYRLSFCRKTCGTC). 3 disulfides stabilise this stretch: Cys-43–Cys-75, Cys-52–Cys-68, and Cys-57–Cys-72.

It belongs to the sea anemone type 1 potassium channel toxin family. Type 1a subfamily.

Its subcellular location is the secreted. The protein localises to the nematocyst. In terms of biological role, inhibits voltage-gated potassium channels (Kv) with higher potency for Kv1.1/KCNA1 and Kv1.3/KCNA3 (IC(50)=3.4 nM). This chain is Kappa-thalatoxin-Tas2a, found in Thalassianthus aster (Fuzzy-tipped anemone).